A 509-amino-acid polypeptide reads, in one-letter code: SH2 domain-containing adapter protein B (509 aa).

2 disordered regions span residues M1–L103 and S144–Y178. The segment at M1 to W410 is mediates interaction with LAT, PTK2/FAK1, JAK1 and JAK3. Residues V44–S61 show a composition bias toward low complexity. Positions C62–D79 are enriched in polar residues. S102 carries the phosphoserine modification. Low complexity predominate over residues S144–S158. A Glycyl lysine isopeptide (Lys-Gly) (interchain with G-Cter in SUMO2) cross-link involves residue K187. The disordered stretch occupies residues A229–K385. Composition is skewed to basic and acidic residues over residues G233–I242 and F250–K262. Residues S307 and S317 each carry the phosphoserine modification. A compositionally biased stretch (polar residues) spans S307–S317. A compositionally biased stretch (basic and acidic residues) spans R319–D334. Phosphoserine is present on S388. In terms of domain architecture, SH2 spans W410 to V504.

In terms of assembly, interacts with PTPN11. Interacts with phosphorylated 'Tyr-720' of the ligand-activated receptor PDGFRA via its SH2 domain. Interacts with the ligand-activated receptors PDGFRB, FGFR1, KDR/VEGFR2, IL2RB and IL2RG. Interacts with EPS8 and V-SRC. Interacts with GRB2 and GRAP. Interacts with CD3Z. Interacts with tyrosine-phosphorylated LAT upon T-cell antigen receptor activation. Interacts with PLCG1. Interacts with ZAP70, LCP2/SLP-76, VAV1 and GRAP2. Interacts with JAK1 and JAK3. Interacts with PTK2/FAK1. Interacts with CRK/CrKII. Interacts with IRS2. In terms of processing, phosphorylated upon PDGFRA, PDGFRB, TCR, IL2 receptor, FGFR1 or VEGFR2 activation. Widely expressed.

It is found in the cytoplasm. Its subcellular location is the cell membrane. Its function is as follows. Adapter protein which regulates several signal transduction cascades by linking activated receptors to downstream signaling components. May play a role in angiogenesis by regulating FGFR1, VEGFR2 and PDGFR signaling. May also play a role in T-cell antigen receptor/TCR signaling, interleukin-2 signaling, apoptosis and neuronal cells differentiation by mediating basic-FGF and NGF-induced signaling cascades. May also regulate IRS1 and IRS2 signaling in insulin-producing cells. This chain is SH2 domain-containing adapter protein B (SHB), found in Homo sapiens (Human).